A 370-amino-acid chain; its full sequence is Dihydrolipoyllysine-residue acetyltransferase component of acetoin cleaving system (370 aa).

The Lipoyl-binding domain maps to 4-79 (IHTLTMPKWG…PVGALLAVVV (76 aa)). Position 45 is an N6-lipoyllysine (Lys45). One can recognise an AB hydrolase-1 domain in the interval 135-355 (PLVLVHGFGG…EAGHMVQMEA (221 aa)).

(R)-lipoate serves as cofactor.

The enzyme catalyses N(6)-[(R)-dihydrolipoyl]-L-lysyl-[protein] + acetyl-CoA = N(6)-[(R)-S(8)-acetyldihydrolipoyl]-L-lysyl-[protein] + CoA. The protein operates within ketone degradation; acetoin degradation. In Pseudomonas putida (Arthrobacter siderocapsulatus), this protein is Dihydrolipoyllysine-residue acetyltransferase component of acetoin cleaving system (acoC).